The primary structure comprises 366 residues: Phospho-N-acetylmuramoyl-pentapeptide-transferase (366 aa).

The next 10 membrane-spanning stretches (helical) occupy residues 27–47, 71–91, 93–113, 134–154, 174–194, 205–225, 245–265, 268–288, 294–314, and 343–363; these read AALF…INSL, TPTM…LLWA, LSNV…AIGF, LGIE…TALA, FLIN…VGAG, GLAI…AYLA, LAVV…FNAP, AIFM…TVAV, IVMA…IIQV, and QVVI…LSTL.

The protein belongs to the glycosyltransferase 4 family. MraY subfamily. Requires Mg(2+) as cofactor.

Its subcellular location is the cell inner membrane. The enzyme catalyses UDP-N-acetyl-alpha-D-muramoyl-L-alanyl-gamma-D-glutamyl-meso-2,6-diaminopimeloyl-D-alanyl-D-alanine + di-trans,octa-cis-undecaprenyl phosphate = di-trans,octa-cis-undecaprenyl diphospho-N-acetyl-alpha-D-muramoyl-L-alanyl-D-glutamyl-meso-2,6-diaminopimeloyl-D-alanyl-D-alanine + UMP. The protein operates within cell wall biogenesis; peptidoglycan biosynthesis. Catalyzes the initial step of the lipid cycle reactions in the biosynthesis of the cell wall peptidoglycan: transfers peptidoglycan precursor phospho-MurNAc-pentapeptide from UDP-MurNAc-pentapeptide onto the lipid carrier undecaprenyl phosphate, yielding undecaprenyl-pyrophosphoryl-MurNAc-pentapeptide, known as lipid I. In Rhizobium etli (strain ATCC 51251 / DSM 11541 / JCM 21823 / NBRC 15573 / CFN 42), this protein is Phospho-N-acetylmuramoyl-pentapeptide-transferase.